The chain runs to 486 residues: Glutamyl-tRNA(Gln) amidotransferase subunit A (486 aa).

Active-site charge relay system residues include K78 and S153. The Acyl-ester intermediate role is filled by S177.

It belongs to the amidase family. GatA subfamily. Heterotrimer of A, B and C subunits.

It carries out the reaction L-glutamyl-tRNA(Gln) + L-glutamine + ATP + H2O = L-glutaminyl-tRNA(Gln) + L-glutamate + ADP + phosphate + H(+). Its function is as follows. Allows the formation of correctly charged Gln-tRNA(Gln) through the transamidation of misacylated Glu-tRNA(Gln) in organisms which lack glutaminyl-tRNA synthetase. The reaction takes place in the presence of glutamine and ATP through an activated gamma-phospho-Glu-tRNA(Gln). This chain is Glutamyl-tRNA(Gln) amidotransferase subunit A, found in Desulfosudis oleivorans (strain DSM 6200 / JCM 39069 / Hxd3) (Desulfococcus oleovorans).